The chain runs to 452 residues: Eukaryotic translation initiation factor 3 subunit E (452 aa).

A compositionally biased stretch (polar residues) spans 1-17; it reads MADNTPTTANDLLNDAT. The disordered stretch occupies residues 1-23; that stretch reads MADNTPTTANDLLNDATQAAAKS. Positions 246 to 426 constitute a PCI domain; it reads PFFNHEPARD…GTVVMNHPPS (181 aa).

Belongs to the eIF-3 subunit E family. In terms of assembly, component of the eukaryotic translation initiation factor 3 (eIF-3) complex.

Its subcellular location is the cytoplasm. Component of the eukaryotic translation initiation factor 3 (eIF-3) complex, which is involved in protein synthesis of a specialized repertoire of mRNAs and, together with other initiation factors, stimulates binding of mRNA and methionyl-tRNAi to the 40S ribosome. The eIF-3 complex specifically targets and initiates translation of a subset of mRNAs involved in cell proliferation. The polypeptide is Eukaryotic translation initiation factor 3 subunit E (int6) (Botryotinia fuckeliana (strain B05.10) (Noble rot fungus)).